Consider the following 647-residue polypeptide: UvrABC system protein C (647 aa).

Residues 26 to 106 (SEPGCYLMRD…IKEHQPYFNI (81 aa)) form the GIY-YIG domain. Positions 216–251 (DQLKDLLHKQMLIQSKLQEFEKAAIIRDQIKGIEQL) constitute a UVR domain.

Belongs to the UvrC family. As to quaternary structure, interacts with UvrB in an incision complex.

It is found in the cytoplasm. The UvrABC repair system catalyzes the recognition and processing of DNA lesions. UvrC both incises the 5' and 3' sides of the lesion. The N-terminal half is responsible for the 3' incision and the C-terminal half is responsible for the 5' incision. This chain is UvrABC system protein C, found in Prochlorococcus marinus (strain MIT 9211).